The primary structure comprises 665 residues: Methionine--tRNA ligase (665 aa).

The short motif at 12-22 (YYPSGKLHIGS) is the 'HIGH' region element. A 'KMSKS' region motif is present at residues 308–312 (KMSKS). Lys-311 contacts ATP. Positions 562–665 (TFDAVEIRVA…PSVPNGSIIG (104 aa)) constitute a tRNA-binding domain.

Belongs to the class-I aminoacyl-tRNA synthetase family. MetG type 2B subfamily. Homodimer.

It is found in the cytoplasm. The enzyme catalyses tRNA(Met) + L-methionine + ATP = L-methionyl-tRNA(Met) + AMP + diphosphate. Functionally, is required not only for elongation of protein synthesis but also for the initiation of all mRNA translation through initiator tRNA(fMet) aminoacylation. The polypeptide is Methionine--tRNA ligase (metG) (Streptococcus pyogenes serotype M6 (strain ATCC BAA-946 / MGAS10394)).